A 390-amino-acid chain; its full sequence is MLIYLIAGEPSGDLLGGRLMAALKERLGEGVSFAGIGGESMRAEGLTSLFPMTELSVMGLVEVLPRIPKILRRVKQTISDIETKRPDALVTIDSWGFNGRIQAGLKARGVPVPRIHYVAPMVWAWKSGRTKTLARVLDLLLTLLPNEPEWFEKEGLKTLHVGHPVIEGAASRGDGAAFRVRHGFAPDRKLLCVLPGSRHSETAKLLAPFGETIALLARRFPDLAVVVPTVETVADEVSQAVKSWALPSMVVRGPEKYDAFAACDAALAASGTVALELAMARLPAVITYKVSPVSAFIATRFLGLSLKFVTLVNILVDEAVMPELLQDDCRPDKLAAAVEHLLTDEAARALQAAGARRALEKLGLGGESPGKRAADAVIDFIRQGKEQRNG.

The protein belongs to the LpxB family.

The catalysed reaction is a lipid X + a UDP-2-N,3-O-bis[(3R)-3-hydroxyacyl]-alpha-D-glucosamine = a lipid A disaccharide + UDP + H(+). The protein operates within bacterial outer membrane biogenesis; LPS lipid A biosynthesis. In terms of biological role, condensation of UDP-2,3-diacylglucosamine and 2,3-diacylglucosamine-1-phosphate to form lipid A disaccharide, a precursor of lipid A, a phosphorylated glycolipid that anchors the lipopolysaccharide to the outer membrane of the cell. This Paramagnetospirillum magneticum (strain ATCC 700264 / AMB-1) (Magnetospirillum magneticum) protein is Lipid-A-disaccharide synthase.